The sequence spans 291 residues: Protease HtpX homolog (291 aa).

Helical transmembrane passes span 4-24 and 39-59; these read ILLF…VASL and GSLL…SLLI. His-144 provides a ligand contact to Zn(2+). Residue Glu-145 is part of the active site. Zn(2+) is bound at residue His-148. 2 helical membrane-spanning segments follow: residues 159-179 and 199-219; these read LIQG…AFAI and ITTV…VAWF. Residue Glu-224 participates in Zn(2+) binding.

This sequence belongs to the peptidase M48B family. Zn(2+) is required as a cofactor.

It localises to the cell inner membrane. In Albidiferax ferrireducens (strain ATCC BAA-621 / DSM 15236 / T118) (Rhodoferax ferrireducens), this protein is Protease HtpX homolog.